The chain runs to 402 residues: uncharacterized protein (402 aa).

This sequence belongs to the peptidase M20 family.

This is an uncharacterized protein from Sinorhizobium fredii (strain NBRC 101917 / NGR234).